The primary structure comprises 352 residues: DNA polymerase IV (352 aa).

Residues 6–187 (IIHIDADCFY…VPVKFISGIG (182 aa)) enclose the UmuC domain. Residues Asp-10 and Asp-105 each coordinate Mg(2+). Glu-106 is an active-site residue.

This sequence belongs to the DNA polymerase type-Y family. In terms of assembly, monomer. It depends on Mg(2+) as a cofactor.

The protein localises to the cytoplasm. The catalysed reaction is DNA(n) + a 2'-deoxyribonucleoside 5'-triphosphate = DNA(n+1) + diphosphate. Its function is as follows. Poorly processive, error-prone DNA polymerase involved in untargeted mutagenesis. Copies undamaged DNA at stalled replication forks, which arise in vivo from mismatched or misaligned primer ends. These misaligned primers can be extended by PolIV. Exhibits no 3'-5' exonuclease (proofreading) activity. May be involved in translesional synthesis, in conjunction with the beta clamp from PolIII. The polypeptide is DNA polymerase IV (Marinomonas sp. (strain MWYL1)).